A 126-amino-acid chain; its full sequence is S-adenosylmethionine decarboxylase proenzyme (126 aa).

Serine 63 acts as the Schiff-base intermediate with substrate; via pyruvic acid in catalysis. At serine 63 the chain carries Pyruvic acid (Ser); by autocatalysis. The Proton acceptor; for processing activity role is filled by histidine 68. Cysteine 83 functions as the Proton donor; for catalytic activity in the catalytic mechanism.

The protein belongs to the prokaryotic AdoMetDC family. Type 1 subfamily. Heterotetramer of two alpha and two beta chains arranged as a dimer of alpha/beta heterodimers. The cofactor is pyruvate. Is synthesized initially as an inactive proenzyme. Formation of the active enzyme involves a self-maturation process in which the active site pyruvoyl group is generated from an internal serine residue via an autocatalytic post-translational modification. Two non-identical subunits are generated from the proenzyme in this reaction, and the pyruvate is formed at the N-terminus of the alpha chain, which is derived from the carboxyl end of the proenzyme. The post-translation cleavage follows an unusual pathway, termed non-hydrolytic serinolysis, in which the side chain hydroxyl group of the serine supplies its oxygen atom to form the C-terminus of the beta chain, while the remainder of the serine residue undergoes an oxidative deamination to produce ammonia and the pyruvoyl group blocking the N-terminus of the alpha chain.

It catalyses the reaction S-adenosyl-L-methionine + H(+) = S-adenosyl 3-(methylsulfanyl)propylamine + CO2. It participates in amine and polyamine biosynthesis; S-adenosylmethioninamine biosynthesis; S-adenosylmethioninamine from S-adenosyl-L-methionine: step 1/1. Catalyzes the decarboxylation of S-adenosylmethionine to S-adenosylmethioninamine (dcAdoMet), the propylamine donor required for the synthesis of the polyamines spermine and spermidine from the diamine putrescine. The sequence is that of S-adenosylmethionine decarboxylase proenzyme from Bacillus velezensis (strain DSM 23117 / BGSC 10A6 / LMG 26770 / FZB42) (Bacillus amyloliquefaciens subsp. plantarum).